Here is a 313-residue protein sequence, read N- to C-terminus: Proline iminopeptidase (313 aa).

The region spanning 35–298 is the AB hydrolase-1 domain; the sequence is KPVVMLHGGP…SPASGHSAFE (264 aa). Catalysis depends on serine 110, which acts as the Nucleophile. Residue aspartate 266 is part of the active site. The active-site Proton donor is the histidine 294.

This sequence belongs to the peptidase S33 family. As to quaternary structure, homooligomer.

Its subcellular location is the cytoplasm. The catalysed reaction is Release of N-terminal proline from a peptide.. May be involved in proline metabolism and sensitivity to ascamycin. Has ascamycin dealanylating activity. This is Proline iminopeptidase (pip) from Xanthomonas citri (Xanthomonas campestris pv. citri).